Here is a 707-residue protein sequence, read N- to C-terminus: MMVHMEVSWLRVLLDNISSYLSLSSMDDLSSNPAHKYYTRGEDIGKLIKPVLENLIDSDAAPSELLNNGFEELAQYVDELREQFQSWQPLSTRIFYVLRIESLASKLRESSLEVFQLLKHCEQHLPADLISPSFEECIELVKLVARDEISYTIDQALKDQKKGVGPTSEVLVKIAESTGLRSNQEILVEGVVLTNMKEDAELTDNDTEAEYLDGLISLTTQMHEYLSDIKQAQLRCPVRVPSDFRCSLSLELMTDPVIVASGQTFERVFIQKWIDMGLMVCPKTRQALSHTTLTPNFIVRAFLASWCETNNVYPPDPLELIHSSEPFPLLVESVRASSSENGHSESLDAEELRQVFSRSASAPGIVSEVVCKTKRNNNAAADRSLTRSNTPWKFPEERHWRHPGIIPATVRETGSSSSIETEVKKLIDDLKSSSLDTQREATARIRILARNSTDNRIVIARCEAIPSLVSLLYSTDERIQADAVTCLLNLSINDNNKSLIAESGAIVPLIHVLKTGYLEEAKANSAATLFSLSVIEEYKTEIGEAGAIEPLVDLLGSGSLSGKKDAATALFNLSIHHENKTKVIEAGAVRYLVELMDPAFGMVEKAVVVLANLATVREGKIAIGEEGGIPVLVEVVELGSARGKENATAALLQLCTHSPKFCNNVIREGVIPPLVALTKSGTARGKEKAQNLLKYFKAHRQSNQRRG.

The U-box domain maps to 239 to 313 (RVPSDFRCSL…ASWCETNNVY (75 aa)). ARM repeat units lie at residues 453 to 492 (TDNR…NLSI), 494 to 534 (DNNK…SLSV), 536 to 575 (EEYK…NLSI), 577 to 615 (HENK…NLAT), and 617 to 656 (REGK…QLCT).

It carries out the reaction S-ubiquitinyl-[E2 ubiquitin-conjugating enzyme]-L-cysteine + [acceptor protein]-L-lysine = [E2 ubiquitin-conjugating enzyme]-L-cysteine + N(6)-ubiquitinyl-[acceptor protein]-L-lysine.. Its pathway is protein modification; protein ubiquitination. In terms of biological role, functions as an E3 ubiquitin ligase. The protein is U-box domain-containing protein 2 (PUB2) of Arabidopsis thaliana (Mouse-ear cress).